We begin with the raw amino-acid sequence, 876 residues long: Leucine--tRNA ligase (876 aa).

Residues 42 to 52 (PYPSGKLHMGH) carry the 'HIGH' region motif. A 'KMSKS' region motif is present at residues 634 to 638 (KMSKS). K637 serves as a coordination point for ATP.

It belongs to the class-I aminoacyl-tRNA synthetase family.

The protein resides in the cytoplasm. It catalyses the reaction tRNA(Leu) + L-leucine + ATP = L-leucyl-tRNA(Leu) + AMP + diphosphate. In Neisseria gonorrhoeae (strain NCCP11945), this protein is Leucine--tRNA ligase.